The chain runs to 59 residues: Large ribosomal subunit protein uL30 (59 aa).

This sequence belongs to the universal ribosomal protein uL30 family. As to quaternary structure, part of the 50S ribosomal subunit.

This is Large ribosomal subunit protein uL30 from Syntrophotalea carbinolica (strain DSM 2380 / NBRC 103641 / GraBd1) (Pelobacter carbinolicus).